The chain runs to 324 residues: Phosphate transport system permease protein PstC 2 (324 aa).

6 helical membrane passes run A30–V50, L90–L110, M125–L145, A174–V194, V237–I257, and P290–V310. One can recognise an ABC transmembrane type-1 domain in the interval F85–A314.

This sequence belongs to the binding-protein-dependent transport system permease family. CysTW subfamily.

It is found in the cell membrane. Its function is as follows. Part of the binding-protein-dependent transport system for phosphate; probably responsible for the translocation of the substrate across the membrane. The polypeptide is Phosphate transport system permease protein PstC 2 (pstC2) (Mycobacterium bovis (strain ATCC BAA-935 / AF2122/97)).